Consider the following 253-residue polypeptide: Imidazole glycerol phosphate synthase subunit HisF (253 aa).

Residues D11 and D130 contribute to the active site.

It belongs to the HisA/HisF family. Heterodimer of HisH and HisF.

Its subcellular location is the cytoplasm. It carries out the reaction 5-[(5-phospho-1-deoxy-D-ribulos-1-ylimino)methylamino]-1-(5-phospho-beta-D-ribosyl)imidazole-4-carboxamide + L-glutamine = D-erythro-1-(imidazol-4-yl)glycerol 3-phosphate + 5-amino-1-(5-phospho-beta-D-ribosyl)imidazole-4-carboxamide + L-glutamate + H(+). It participates in amino-acid biosynthesis; L-histidine biosynthesis; L-histidine from 5-phospho-alpha-D-ribose 1-diphosphate: step 5/9. IGPS catalyzes the conversion of PRFAR and glutamine to IGP, AICAR and glutamate. The HisF subunit catalyzes the cyclization activity that produces IGP and AICAR from PRFAR using the ammonia provided by the HisH subunit. This is Imidazole glycerol phosphate synthase subunit HisF from Cereibacter sphaeroides (strain ATCC 17029 / ATH 2.4.9) (Rhodobacter sphaeroides).